A 350-amino-acid chain; its full sequence is Atypical chemokine receptor 4 (350 aa).

At 1–42 (MALEQNQSTDYYYEENEMNGTYDYSQYELICIKEDVREFAKV) the chain is on the extracellular side. N-linked (GlcNAc...) asparagine glycans are attached at residues N6 and N19. A helical transmembrane segment spans residues 43–63 (FLPVFLTIVFVIGLAGNSMVV). Topologically, residues 64–87 (AIYAYYKKQRTKTDVYILNLAVAD) are cytoplasmic. The chain crosses the membrane as a helical span at residues 88 to 108 (LLLLFTLPFWAVNAVHGWVLG). Residues 109–113 (KIMCK) lie on the Extracellular side of the membrane. A disulfide bond links C112 and C184. Residues 114 to 134 (ITSALYTLNFVSGMQFLACIS) form a helical membrane-spanning segment. The Cytoplasmic portion of the chain corresponds to 135–154 (IDRYVAVTKVPSQSGVGKPC). A helical membrane pass occupies residues 155-175 (WIICFCVWMAAILLSIPQLVF). Over 176–201 (YTVNDNARCIPIFPRYLGTSMKALIQ) the chain is Extracellular. Residues 202-222 (MLEICIGFVVPFLIMGVCYFI) form a helical membrane-spanning segment. The Cytoplasmic segment spans residues 223–240 (TARTLMKMPNIKISRPLK). Residues 241-261 (VLLTVVIVFIVTQLPYNIVKF) traverse the membrane as a helical segment. Residues 262–289 (CRAIDIIYSLITSCNMSKRMDIAIQVTE) lie on the Extracellular side of the membrane. The chain crosses the membrane as a helical span at residues 290-310 (SIALFHSCLNPILYVFMGASF). The Cytoplasmic portion of the chain corresponds to 311-350 (KNYVMKVAKKYGSWRRQRQSVEEFPFDSEGPTEPTSTFSI).

It belongs to the G-protein coupled receptor 1 family. Atypical chemokine receptor subfamily. Forms heteromers with CXCR3. Interacts with ARRB1 and ARRB2. In terms of processing, the Ser/Thr residues in the C-terminal cytoplasmic tail may be phosphorylated. In terms of tissue distribution, predominantly expressed in heart. Lower expression in lung, pancreas, spleen, colon, skeletal muscle and small intestine.

The protein localises to the early endosome. The protein resides in the recycling endosome. Its subcellular location is the cell membrane. In terms of biological role, atypical chemokine receptor that controls chemokine levels and localization via high-affinity chemokine binding that is uncoupled from classic ligand-driven signal transduction cascades, resulting instead in chemokine sequestration, degradation, or transcytosis. Also known as interceptor (internalizing receptor) or chemokine-scavenging receptor or chemokine decoy receptor. Acts as a receptor for chemokines CCL2, CCL8, CCL13, CCL19, CCL21 and CCL25. Chemokine-binding does not activate G-protein-mediated signal transduction but instead induces beta-arrestin recruitment, leading to ligand internalization. Plays an important role in controlling the migration of immune and cancer cells that express chemokine receptors CCR7 and CCR9, by reducing the availability of CCL19, CCL21, and CCL25 through internalization. Negatively regulates CXCR3-induced chemotaxis. Regulates T-cell development in the thymus. In Homo sapiens (Human), this protein is Atypical chemokine receptor 4 (ACKR4).